We begin with the raw amino-acid sequence, 289 residues long: 33 kDa chaperonin (289 aa).

Cystine bridges form between Cys-229-Cys-231 and Cys-262-Cys-265.

Belongs to the HSP33 family. Under oxidizing conditions two disulfide bonds are formed involving the reactive cysteines. Under reducing conditions zinc is bound to the reactive cysteines and the protein is inactive.

It localises to the cytoplasm. Redox regulated molecular chaperone. Protects both thermally unfolding and oxidatively damaged proteins from irreversible aggregation. Plays an important role in the bacterial defense system toward oxidative stress. This is 33 kDa chaperonin from Pectobacterium carotovorum subsp. carotovorum (strain PC1).